The primary structure comprises 681 residues: Ribosomal L1 domain-containing protein CG13096 (681 aa).

2 disordered regions span residues 1 to 248 and 579 to 681; these read MVKV…AKSK and DAAP…DDEE. Residues S15 and S17 each carry the phosphoserine modification. Positions 54–74 are enriched in basic and acidic residues; sequence VKKDAIKKEPEVSKKGAEKKQ. Phosphoserine is present on S89. Over residues 103-112 the composition is skewed to low complexity; the sequence is KPAASGAPVG. Phosphoserine is present on S128. The segment covering 189 to 217 has biased composition (low complexity); it reads QAAPAKPAKAQPASQLQKKAKAVQKLSKP. The span at 599-610 shows a compositional bias: basic and acidic residues; the sequence is KESSSEGAKADA. Positions 611-681 are enriched in acidic residues; that stretch reads ESDEEEEVEE…EDDDDDDDEE (71 aa).

The protein belongs to the universal ribosomal protein uL1 family. Highly divergent.

The sequence is that of Ribosomal L1 domain-containing protein CG13096 from Drosophila melanogaster (Fruit fly).